A 948-amino-acid polypeptide reads, in one-letter code: Zinc finger CCCH domain-containing protein 3 (948 aa).

Disordered stretches follow at residues 25–108 (HGNA…VPQQ), 121–219 (QNVV…RRTV), 265–296 (VDAG…REAS), and 336–493 (NVCK…LKKT). Basic residues predominate over residues 56 to 74 (RPSRRGYSSHHGPSWRKKY). Low complexity predominate over residues 128–141 (KPPSKSGSASASGA). A compositionally biased stretch (basic and acidic residues) spans 157 to 166 (QRPREGEGEP). The span at 372 to 398 (SAPSKYKWKASSPSASSSSSFRWQSEA) shows a compositional bias: low complexity. The span at 405–415 (SQLSPVLSRSP) shows a compositional bias: polar residues. S408 carries the post-translational modification Phosphoserine. Residues 441-452 (VKSRTKIIRRRS) show a composition bias toward basic residues. 5 C3H1-type zinc fingers span residues 667–695 (EKRK…HDPE), 699–722 (VCTR…HHVS), 723–749 (KEKM…HVYV), 750–777 (SRKA…HTLL), and 778–800 (CPDF…HRTQ). Disordered regions lie at residues 798–891 (RTQK…HEAP) and 913–948 (ISLQ…KPRL). Residues 834 to 846 (SASQRPTRQTPSS) show a composition bias toward polar residues. Low complexity-rich tracts occupy residues 847-856 (AALTAAAVAA) and 864-885 (SASP…PPAS). Phosphoserine occurs at positions 918 and 920.

In terms of assembly, interacts with SMAD1, SMAD3, SMAD4, CPSF2 and CPSF3.

The protein localises to the nucleus. Required for the export of polyadenylated mRNAs from the nucleus. Enhances ACVR1B-induced SMAD-dependent transcription. Binds to single-stranded DNA but not to double-stranded DNA in vitro. Involved in RNA cleavage. This chain is Zinc finger CCCH domain-containing protein 3 (ZC3H3), found in Homo sapiens (Human).